A 377-amino-acid polypeptide reads, in one-letter code: Alanine racemase (377 aa).

Catalysis depends on K37, which acts as the Proton acceptor; specific for D-alanine. N6-(pyridoxal phosphate)lysine is present on K37. Residue R135 participates in substrate binding. The Proton acceptor; specific for L-alanine role is filled by Y271. Substrate is bound at residue M319.

Belongs to the alanine racemase family. The cofactor is pyridoxal 5'-phosphate.

It carries out the reaction L-alanine = D-alanine. Its pathway is amino-acid biosynthesis; D-alanine biosynthesis; D-alanine from L-alanine: step 1/1. Catalyzes the interconversion of L-alanine and D-alanine. May also act on other amino acids. This is Alanine racemase (alr) from Helicobacter pylori (strain HPAG1).